A 513-amino-acid polypeptide reads, in one-letter code: Beta-glucosidase 5 (513 aa).

Positions 1–26 (MAAAIAVVYLSLLLLLLHGAAPAVLG) are cleaved as a signal peptide. Gln46 provides a ligand contact to a beta-D-glucoside. Glu192 functions as the Proton donor in the catalytic mechanism. Residues Cys211 and Cys220 are joined by a disulfide bond. N-linked (GlcNAc...) asparagine glycans are attached at residues Asn224 and Asn273. Residues Tyr336 and Glu405 each contribute to the a beta-D-glucoside site. Glu405 acts as the Nucleophile in catalysis. Asn412 carries N-linked (GlcNAc...) asparagine glycosylation. Residues Trp447, 454–455 (EY), and Tyr463 contribute to the a beta-D-glucoside site.

Belongs to the glycosyl hydrolase 1 family.

The catalysed reaction is Hydrolysis of terminal, non-reducing beta-D-glucosyl residues with release of beta-D-glucose.. This chain is Beta-glucosidase 5 (BGLU5), found in Oryza sativa subsp. japonica (Rice).